We begin with the raw amino-acid sequence, 303 residues long: Glycine--tRNA ligase alpha subunit (303 aa).

This sequence belongs to the class-II aminoacyl-tRNA synthetase family. Tetramer of two alpha and two beta subunits.

It is found in the cytoplasm. It catalyses the reaction tRNA(Gly) + glycine + ATP = glycyl-tRNA(Gly) + AMP + diphosphate. This chain is Glycine--tRNA ligase alpha subunit, found in Streptococcus equi subsp. zooepidemicus (strain H70).